A 530-amino-acid polypeptide reads, in one-letter code: Putative ABC transporter ATP-binding protein SSO2030 (530 aa).

2 ABC transporter domains span residues 6–243 and 282–516; these read IRDL…LGLE and ALYA…EPPL. ATP-binding positions include 38-45 and 314-321; these read GRSGSGKS and GKNGSGKT.

Belongs to the ABC transporter superfamily.

It is found in the cell membrane. Its function is as follows. Probably part of an ABC transporter complex. Responsible for energy coupling to the transport system. The sequence is that of Putative ABC transporter ATP-binding protein SSO2030 from Saccharolobus solfataricus (strain ATCC 35092 / DSM 1617 / JCM 11322 / P2) (Sulfolobus solfataricus).